A 493-amino-acid chain; its full sequence is Probable cytochrome P450 313a2 (493 aa).

Cys-438 contacts heme.

This sequence belongs to the cytochrome P450 family. The cofactor is heme.

The protein localises to the endoplasmic reticulum membrane. It localises to the microsome membrane. May be involved in the metabolism of insect hormones and in the breakdown of synthetic insecticides. The polypeptide is Probable cytochrome P450 313a2 (Cyp313a2) (Drosophila melanogaster (Fruit fly)).